The following is a 398-amino-acid chain: L-rhamnonate dehydratase (398 aa).

Histidine 22 and arginine 48 together coordinate substrate. Positions 214, 241, and 269 each coordinate Mg(2+). Histidine 319 acts as the Proton acceptor in catalysis. Residue glutamate 339 coordinates substrate.

Belongs to the mandelate racemase/muconate lactonizing enzyme family. RhamD subfamily. In terms of assembly, homooctamer; tetramer of dimers. Requires Mg(2+) as cofactor.

The catalysed reaction is L-rhamnonate = 2-dehydro-3-deoxy-L-rhamnonate + H2O. Catalyzes the dehydration of L-rhamnonate to 2-keto-3-deoxy-L-rhamnonate (KDR). In Verminephrobacter eiseniae (strain EF01-2), this protein is L-rhamnonate dehydratase.